Here is a 476-residue protein sequence, read N- to C-terminus: 3-isopropylmalate dehydratase large subunit (476 aa).

Cys353, Cys413, and Cys416 together coordinate [4Fe-4S] cluster.

The protein belongs to the aconitase/IPM isomerase family. LeuC type 1 subfamily. As to quaternary structure, heterodimer of LeuC and LeuD. The cofactor is [4Fe-4S] cluster.

It carries out the reaction (2R,3S)-3-isopropylmalate = (2S)-2-isopropylmalate. It functions in the pathway amino-acid biosynthesis; L-leucine biosynthesis; L-leucine from 3-methyl-2-oxobutanoate: step 2/4. Catalyzes the isomerization between 2-isopropylmalate and 3-isopropylmalate, via the formation of 2-isopropylmaleate. The polypeptide is 3-isopropylmalate dehydratase large subunit (Yersinia pseudotuberculosis serotype O:1b (strain IP 31758)).